Reading from the N-terminus, the 323-residue chain is tRNA U34 carboxymethyltransferase (323 aa).

Residues Lys91, Trp105, Lys110, Gly130, 152–154, 181–182, Met196, Tyr200, and Arg315 contribute to the carboxy-S-adenosyl-L-methionine site; these read DPT and IE.

The protein belongs to the class I-like SAM-binding methyltransferase superfamily. CmoB family. As to quaternary structure, homotetramer.

The enzyme catalyses carboxy-S-adenosyl-L-methionine + 5-hydroxyuridine(34) in tRNA = 5-carboxymethoxyuridine(34) in tRNA + S-adenosyl-L-homocysteine + H(+). Catalyzes carboxymethyl transfer from carboxy-S-adenosyl-L-methionine (Cx-SAM) to 5-hydroxyuridine (ho5U) to form 5-carboxymethoxyuridine (cmo5U) at position 34 in tRNAs. The polypeptide is tRNA U34 carboxymethyltransferase (Cronobacter sakazakii (strain ATCC BAA-894) (Enterobacter sakazakii)).